We begin with the raw amino-acid sequence, 256 residues long: Membrane-anchored junction protein (256 aa).

At 1-232 (MSLKPFTYPF…HSSPPPPKEP (232 aa)) the chain is on the nuclear side. 2 disordered regions span residues 143–197 (KRKL…TPAS) and 211–235 (HGLQGLVVPPLQHSSPPPPKEPGAR). Residues 164–173 (ETSSEASSNK) show a composition bias toward polar residues. Residues 175 to 184 (PLKESKRSTD) are compositionally biased toward basic and acidic residues. The chain crosses the membrane as a helical span at residues 233–251 (GARGFLGFLSALFPFRYFF). Residues 252 to 256 (KKSGQ) are Perinuclear space-facing.

The protein belongs to the MAJIN family. As to quaternary structure, component of the MAJIN-TERB1-TERB2 complex, composed of MAJIN, TERB1 and TERB2. In terms of tissue distribution, specifically expressed in germline tissues.

It localises to the nucleus inner membrane. It is found in the chromosome. Its subcellular location is the telomere. Meiosis-specific telomere-associated protein involved in meiotic telomere attachment to the nucleus inner membrane, a crucial step for homologous pairing and synapsis. Component of the MAJIN-TERB1-TERB2 complex, which promotes telomere cap exchange by mediating attachment of telomeric DNA to the inner nuclear membrane and replacement of the protective cap of telomeric chromosomes: in early meiosis, the MAJIN-TERB1-TERB2 complex associates with telomeric DNA and the shelterin/telosome complex. During prophase, the complex matures and promotes release of the shelterin/telosome complex from telomeric DNA. In the complex, MAJIN acts as the anchoring subunit to the nucleus inner membrane. MAJIN shows DNA-binding activity, possibly for the stabilization of telomere attachment on the nucleus inner membrane. This Mus musculus (Mouse) protein is Membrane-anchored junction protein.